Here is a 354-residue protein sequence, read N- to C-terminus: Ribosomal RNA large subunit methyltransferase M (354 aa).

S-adenosyl-L-methionine contacts are provided by residues Ser-183, 216-219 (SPGG), Asp-235, Asp-255, and Asp-271. Lys-300 acts as the Proton acceptor in catalysis.

It belongs to the class I-like SAM-binding methyltransferase superfamily. RNA methyltransferase RlmE family. RlmM subfamily. In terms of assembly, monomer.

Its subcellular location is the cytoplasm. The enzyme catalyses cytidine(2498) in 23S rRNA + S-adenosyl-L-methionine = 2'-O-methylcytidine(2498) in 23S rRNA + S-adenosyl-L-homocysteine + H(+). Functionally, catalyzes the 2'-O-methylation at nucleotide C2498 in 23S rRNA. The protein is Ribosomal RNA large subunit methyltransferase M of Pseudomonas entomophila (strain L48).